The sequence spans 555 residues: Transmembrane protein 87A (555 aa).

An N-terminal signal peptide occupies residues 1–21; sequence MAVAAWLQVSPVIFLLLGAQP. Residues 22-225 lie on the Lumenal side of the membrane; that stretch reads FPLSFLGAGP…YEYLTLEDYP (204 aa). Intrachain disulfides connect Cys74/Cys128 and Cys89/Cys431. Asn79, Asn157, and Asn160 each carry an N-linked (GlcNAc...) asparagine glycan. A helical transmembrane segment spans residues 226–246; the sequence is LMIFFMVMCIVYVLFGVLWLA. At 247-257 the chain is on the cytoplasmic side; it reads WSACYWRDLLR. A helical membrane pass occupies residues 258 to 278; sequence IQFWIGAVIFLGMFEKAVFYA. Topologically, residues 279-305 are lumenal; it reads EFQNIRYKGESVQNALVLAELLSAVKR. The helical transmembrane segment at 306 to 322 threads the bilayer; it reads SLARTLVIIVSLGYGIV. Residues 323-325 lie on the Cytoplasmic side of the membrane; the sequence is KPR. The helical transmembrane segment at 326 to 346 threads the bilayer; it reads LGVTLHKVVVAGALYLLFSGM. Over 347-361 the chain is Lumenal; it reads EGVLRVTGAQTDLAS. Residues 362–382 traverse the membrane as a helical segment; the sequence is LAFIPLAFLDTALCWWIFISL. At 383–403 the chain is on the cytoplasmic side; that stretch reads TQTMKLLKLRRNIVKLSLYRH. Residues 404 to 424 traverse the membrane as a helical segment; it reads FTNTLILAVAASIVFIIWTTM. At 425–437 the chain is on the lumenal side; that stretch reads KFRIVTCQSDWRE. Residues 438 to 458 form a helical membrane-spanning segment; it reads LWVDDAIWRLLFSMILFVIMI. The Cytoplasmic portion of the chain corresponds to 459–555; sequence LWRPSANNQR…ITHFERSKME (97 aa). A disordered region spans residues 491–515; the sequence is SFEGMKMRSTKQEPNGTSKVNKAQE. Positions 502–511 are enriched in polar residues; sequence QEPNGTSKVN. At Ser540 the chain carries Phosphoserine.

This sequence belongs to the LU7TM family. TMEM87 subfamily. As to quaternary structure, may interact with STOML3; STOML3 potentiates the mechanosensitive ion channel activity associated with TMEM87A. As to expression, highly expressed in sensory neurons responsive to mechanical force.

It localises to the cell membrane. The protein localises to the golgi apparatus membrane. It is found in the cell projection. Its subcellular location is the ruffle. In terms of biological role, potential monoatomic ion channel gated by mechanical force, implicated in normal touch sensitivity through the generation of mechanically activated currents. However, a direct channel activity is debated and an alternative could be that it functions as a chaperone for an unidentified mechanosensitive ion channel. Could also be involved in cell mechanosensitivity regulating cell adhesion and migration. May also be involved in retrograde transport from endosomes to the trans-Golgi network (TGN). The polypeptide is Transmembrane protein 87A (Mus musculus (Mouse)).